Here is a 1091-residue protein sequence, read N- to C-terminus: Rho GTPase-activating protein 7 (1091 aa).

Residues 11–78 (LTQIEAKEAC…LNKCAVMKLE (68 aa)) enclose the SAM domain. Residues Ser-86, Ser-89, and Ser-129 each carry the phosphoserine modification. Disordered regions lie at residues 120–181 (SPKQ…TTPR), 296–329 (RSVS…TRSL), 402–439 (RTGS…SSRM), and 491–552 (SDEG…SGVG). Over residues 130–143 (PDNSRLQSATSRES) the composition is skewed to polar residues. 2 stretches are compositionally biased toward low complexity: residues 155–166 (SSIRSLSSTSSS) and 298–324 (VSNS…SPVT). Residues 274–447 (QLNCVEISAL…RMSIYDNVPG (174 aa)) form a focal adhesion-targeting (FAT) region. Position 321 is a phosphoserine (Ser-321). Over residues 414–425 (LRRENSSDSPKE) the composition is skewed to basic and acidic residues. Positions 499 to 511 (ALDSVSPCPSSPK) are enriched in polar residues. Over residues 513-525 (IHLDVDHDRRTPS) the composition is skewed to basic and acidic residues. Residues 526-535 (DLDSTGNSLN) are compositionally biased toward polar residues. The interval 614-636 (KHGFSWAVPKFMKRIKVPDYKDR) is polybasic cluster (PBR). Residues 641–847 (VPLTVNVQRS…HMIAECKKLF (207 aa)) enclose the Rho-GAP domain. In terms of domain architecture, START spans 877–1084 (SNDQPADYRH…RDSFSNQSTE (208 aa)).

In terms of assembly, interacts with EF1A1, facilitates EF1A1 distribution to the membrane periphery and ruffles upon growth factor stimulation and suppresses cell migration. Interacts with tensin TNS1 (via N-terminus); the interaction is decreased by phosphorylation of TNS1. Interacts with TNS3 and PTEN; in resting cells, interacts with TNS3 (via C2 tensin-type domain) but, following growth factor stimulation, TNS3 and PTEN are phosphorylated which leads to weakened interaction with TNS3 and enhanced interaction with PTEN. Interacts (via C-terminus) with tensin TNS4 (via SH2 domain); the interaction is independent of tyrosine phosphorylation of DLC1.

The protein localises to the cytoplasm. It is found in the cell junction. Its subcellular location is the focal adhesion. It localises to the membrane. Functions as a GTPase-activating protein for the small GTPases RHOA, RHOB, RHOC and CDC42, terminating their downstream signaling. This induces morphological changes and detachment through cytoskeletal reorganization, playing a critical role in biological processes such as cell migration and proliferation. Also functions in vivo as an activator of the phospholipase PLCD1. Active DLC1 increases cell migration velocity but reduces directionality. Required for growth factor-induced epithelial cell migration; in resting cells, interacts with TNS3 while PTEN interacts with the p85 regulatory subunit of the PI3K kinase complex but growth factor stimulation induces phosphorylation of TNS3 and PTEN, causing them to change their binding preference so that PTEN interacts with DLC1 and TNS3 interacts with p85. The PTEN-DLC1 complex translocates to the posterior of migrating cells to activate RHOA while the TNS3-p85 complex translocates to the leading edge of migrating cells to promote RAC1 activation. This is Rho GTPase-activating protein 7 (Dlc1) from Rattus norvegicus (Rat).